We begin with the raw amino-acid sequence, 129 residues long: SOSS complex subunit C homolog (129 aa).

Residues 105 to 129 (RLEPLPSPATTPTTPNAPPSHNISK) are disordered.

Belongs to the SOSS-C family.

This is SOSS complex subunit C homolog from Drosophila erecta (Fruit fly).